The sequence spans 321 residues: Lipoyl synthase (321 aa).

Residues Cys-68, Cys-73, Cys-79, Cys-94, Cys-98, Cys-101, and Ser-308 each coordinate [4Fe-4S] cluster. One can recognise a Radical SAM core domain in the interval 80–297 (FNHGTATFMI…KAEALAMGFT (218 aa)).

The protein belongs to the radical SAM superfamily. Lipoyl synthase family. Requires [4Fe-4S] cluster as cofactor.

It localises to the cytoplasm. The enzyme catalyses [[Fe-S] cluster scaffold protein carrying a second [4Fe-4S](2+) cluster] + N(6)-octanoyl-L-lysyl-[protein] + 2 oxidized [2Fe-2S]-[ferredoxin] + 2 S-adenosyl-L-methionine + 4 H(+) = [[Fe-S] cluster scaffold protein] + N(6)-[(R)-dihydrolipoyl]-L-lysyl-[protein] + 4 Fe(3+) + 2 hydrogen sulfide + 2 5'-deoxyadenosine + 2 L-methionine + 2 reduced [2Fe-2S]-[ferredoxin]. It participates in protein modification; protein lipoylation via endogenous pathway; protein N(6)-(lipoyl)lysine from octanoyl-[acyl-carrier-protein]: step 2/2. Functionally, catalyzes the radical-mediated insertion of two sulfur atoms into the C-6 and C-8 positions of the octanoyl moiety bound to the lipoyl domains of lipoate-dependent enzymes, thereby converting the octanoylated domains into lipoylated derivatives. The sequence is that of Lipoyl synthase from Salmonella paratyphi A (strain AKU_12601).